Reading from the N-terminus, the 172-residue chain is Envelope protein UL45 (172 aa).

The Intravirion portion of the chain corresponds to 1 to 27; sequence MPLRASEHAYRPLGPGTPPVRARLPAA. Residues 28 to 48 traverse the membrane as a helical; Signal-anchor for type II membrane protein segment; that stretch reads AWVGVGTIIGGVVIIAALVLV. Residues 49–172 are Virion surface-facing; that stretch reads PSRASWALSP…TSTRNALGLP (124 aa).

Belongs to the herpesviridae HHV-1 UL45 family.

The protein localises to the virion membrane. In terms of biological role, important virulence factor of HSV neurotropism. Seems to be required for glycoprotein B-induced fusion. Dispensable for growth in vitro. In Homo sapiens (Human), this protein is Envelope protein UL45.